A 288-amino-acid chain; its full sequence is Glycine--tRNA ligase alpha subunit (288 aa).

This sequence belongs to the class-II aminoacyl-tRNA synthetase family. As to quaternary structure, tetramer of two alpha and two beta subunits.

It localises to the cytoplasm. It catalyses the reaction tRNA(Gly) + glycine + ATP = glycyl-tRNA(Gly) + AMP + diphosphate. This chain is Glycine--tRNA ligase alpha subunit, found in Rickettsia africae (strain ESF-5).